The sequence spans 230 residues: Membrane protein (230 aa).

At 1-24 (MSSPTTPVPVISWTADEAIKFLKE) the chain is on the virion surface side. The helical transmembrane segment at 25–45 (WNFSLGIIVLFITIILQFGYT) threads the bilayer. Residues 46 to 55 (SRSMFVYVIK) lie on the Intravirion side of the membrane. The helical transmembrane segment at 56–76 (MVILWLMWPLTIILTIFNCVY) threads the bilayer. The Virion surface portion of the chain corresponds to 77-84 (ALNNVYLG). A helical membrane pass occupies residues 85-105 (FSIVFTIVAIIMWVVYFVNSI). The Intravirion portion of the chain corresponds to 106-228 (RLFIRTGSWW…SGMDTALLRN (123 aa)).

It belongs to the betacoronaviruses M protein family. Homomultimer. Interacts with envelope E protein in the budding compartment of the host cell, which is located between endoplasmic reticulum and the Golgi complex. Forms a complex with HE and S proteins. Interacts with nucleocapsid N protein. This interaction probably participates in RNA packaging into the virus.

The protein resides in the virion membrane. It localises to the host Golgi apparatus membrane. Component of the viral envelope that plays a central role in virus morphogenesis and assembly via its interactions with other viral proteins. The polypeptide is Membrane protein (Porcine hemagglutinating encephalomyelitis virus (strain 67N) (HEV-67N)).